The sequence spans 371 residues: Peptidyl-prolyl cis-trans isomerase D (371 aa).

The 162-residue stretch at 11–172 (FFDIQIGNEK…KDVTIVECGE (162 aa)) folds into the PPIase cyclophilin-type domain. The disordered stretch occupies residues 175–195 (GQDYDDADKQTPDATGDPYED). TPR repeat units follow at residues 214–247 (ASEL…LHEF), 267–300 (FALH…ANAA), and 308–341 (AKAY…APGD).

This sequence belongs to the cyclophilin-type PPIase family. PPIase D subfamily.

The protein resides in the cytoplasm. It carries out the reaction [protein]-peptidylproline (omega=180) = [protein]-peptidylproline (omega=0). PPIases accelerate the folding of proteins. It catalyzes the cis-trans isomerization of proline imidic peptide bonds in oligopeptides. In Aspergillus oryzae (strain ATCC 42149 / RIB 40) (Yellow koji mold), this protein is Peptidyl-prolyl cis-trans isomerase D (cpr6).